The chain runs to 123 residues: Guanine nucleotide exchange factor MSS4 (123 aa).

At methionine 1 the chain carries N-acetylmethionine. Residues 9–123 (ELVSAEGRNR…YVALERVSHE (115 aa)) enclose the MSS4 domain. 4 residues coordinate Zn(2+): cysteine 23, cysteine 26, cysteine 94, and cysteine 97.

The protein belongs to the DSS4/MSS4 family. Interacts with RAB8A.

Its function is as follows. Guanine-nucleotide-releasing protein that acts on members of the SEC4/YPT1/RAB subfamily. Stimulates GDP release from both YPT1, RAB3A and RAB10, but is less active on these proteins than on the SEC4 protein. Might play a general role in vesicular transport. In Mus musculus (Mouse), this protein is Guanine nucleotide exchange factor MSS4.